The sequence spans 428 residues: Synaptotagmin-1 (428 aa).

Residues methionine 1–asparagine 67 lie on the Vesicular side of the membrane. The segment at alanine 16–leucine 50 is disordered. Residues leucine 68–cysteine 92 traverse the membrane as a helical segment. At arginine 93 to asparagine 428 the chain is on the cytoplasmic side. The residue at position 123 (serine 123) is a Phosphoserine; by PRKC2. A phospholipid binding region spans residues serine 147–asparagine 395. C2 domains lie at lysine 153–lysine 272 and lysine 286–histidine 419. The Ca(2+) site is built by aspartate 184, aspartate 190, aspartate 242, phenylalanine 243, aspartate 244, serine 247, lysine 248, aspartate 250, aspartate 317, aspartate 323, aspartate 377, and aspartate 379.

The protein belongs to the synaptotagmin family. Binds SNAP25. Isoform 3 binds SNAP25 with higher affinity. Ca(2+) is required as a cofactor.

The protein localises to the cytoplasmic vesicle. Its subcellular location is the secretory vesicle. It is found in the synaptic vesicle membrane. The protein resides in the synapse. Functionally, acts as inhibitor of neurotransmitter release. Overexpression leads to a decrease in the amplitude of the excitatory postsynaptic potential in dissected cholinergic and glutaminergic neurons while depletion with antisense oligonucleotides leads to an increase. Overexpression of isoform 1 blocks the reversal of synaptic depression by serotonin in sensory neurons. The chain is Synaptotagmin-1 (SYT1) from Aplysia californica (California sea hare).